Reading from the N-terminus, the 313-residue chain is Ribosomal RNA small subunit methyltransferase H (313 aa).

Residues 35-37 (GGH), aspartate 55, phenylalanine 80, aspartate 102, and glutamine 109 contribute to the S-adenosyl-L-methionine site.

It belongs to the methyltransferase superfamily. RsmH family.

Its subcellular location is the cytoplasm. The catalysed reaction is cytidine(1402) in 16S rRNA + S-adenosyl-L-methionine = N(4)-methylcytidine(1402) in 16S rRNA + S-adenosyl-L-homocysteine + H(+). Specifically methylates the N4 position of cytidine in position 1402 (C1402) of 16S rRNA. The polypeptide is Ribosomal RNA small subunit methyltransferase H (Shewanella frigidimarina (strain NCIMB 400)).